Reading from the N-terminus, the 508-residue chain is Flagellin (508 aa).

This sequence belongs to the bacterial flagellin family.

Its subcellular location is the secreted. The protein resides in the bacterial flagellum. Flagellin is the subunit protein which polymerizes to form the filaments of bacterial flagella. The chain is Flagellin (fliC) from Salmonella berta.